A 641-amino-acid polypeptide reads, in one-letter code: MASTYSTPRWRTALLGGFLTTLPWLSSGMAGKTQADYFIKSLPGAPEPLLKMHAGHIEVDAEHNGNLFFWHYENRHIADRQRTVLWLNGGPGCSSMDGALMEVGPYRVQADGNLHYNNGSWDEFANLLFVDQPVGTGFSYVNTDSYLTELDQMANHMVIFLEKWFGLFPEYEHDDLYIAGESYAGQHIPYIARAIVKRNKEQGKTPWALKGLLIGNGWISPVDQYLSYIPYAYQNGLMKADSDMAKRVENQQRICIKKLEDGGMDAVDTNDCEQIMVNILEETKDRKADRMNQCVNMYDIRLRDDASCGMNWPPDLASVTPYLRRPDVIQALHINPDKKTGWQECNGAVSGHFRAKKSEPSVRFLPELIPEVPTLLFSGDKDFICNHIGTEEMIKNMQWSGGKGFEVTPGVWAPKQDWTFEGEAAGSWQEARNLTYVVFYNSSHMVPFDYPRRTRDMLDRFMGVDIEQIGGVPSDSRIDGEKGPLTSVGDHPNSTRAEEDKATDVKQAEWKAYYRSGQVALVVVVIVAALWGIFLWRSRRRHTKTAYQGDDGDEGRESLLTGMGLDNFRRKERRSDLEAADFDERELDDLDGASKKPGNGYASLGSEKERQSHNDSTFSLGGDSDDEAGSSDGPKRKGGSS.

A signal peptide spans 1–35 (MASTYSTPRWRTALLGGFLTTLPWLSSGMAGKTQA). The Lumenal portion of the chain corresponds to 36-515 (DYFIKSLPGA…KQAEWKAYYR (480 aa)). A glycan (N-linked (GlcNAc...) asparagine) is linked at Asn-118. Active-site residues include Ser-182 and Asp-382. Asn-433 and Asn-441 each carry an N-linked (GlcNAc...) asparagine glycan. His-444 is an active-site residue. The disordered stretch occupies residues 472 to 502 (VPSDSRIDGEKGPLTSVGDHPNSTRAEEDKA). N-linked (GlcNAc...) asparagine glycosylation occurs at Asn-493. The chain crosses the membrane as a helical span at residues 516-536 (SGQVALVVVVIVAALWGIFLW). Residues 537–641 (RSRRRHTKTA…DGPKRKGGSS (105 aa)) lie on the Cytoplasmic side of the membrane. A disordered region spans residues 585-641 (RELDDLDGASKKPGNGYASLGSEKERQSHNDSTFSLGGDSDDEAGSSDGPKRKGGSS).

It belongs to the peptidase S10 family.

It localises to the golgi apparatus. The protein localises to the trans-Golgi network membrane. The catalysed reaction is Preferential release of a C-terminal arginine or lysine residue.. Protease with a carboxypeptidase B-like function involved in the C-terminal processing of the lysine and arginine residues from protein precursors. Promotes cell fusion and is involved in the programmed cell death. This is Pheromone-processing carboxypeptidase KEX1 (KEX1) from Leptosphaeria maculans (strain JN3 / isolate v23.1.3 / race Av1-4-5-6-7-8) (Blackleg fungus).